The chain runs to 187 residues: Ubiquinone biosynthesis protein COQ4 homolog, mitochondrial (187 aa).

Zn(2+) is bound by residues histidine 77, aspartate 78, histidine 81, and glutamate 93.

This sequence belongs to the COQ4 family. In terms of assembly, component of a multi-subunit COQ enzyme complex. The cofactor is Zn(2+).

It is found in the mitochondrion inner membrane. The enzyme catalyses a 4-hydroxy-3-methoxy-5-(all-trans-polyprenyl)benzoate + H(+) = a 2-methoxy-6-(all-trans-polyprenyl)phenol + CO2. Its pathway is cofactor biosynthesis; ubiquinone biosynthesis. Its function is as follows. Lyase that catalyzes the C1-decarboxylation of 4-hydroxy-3-methoxy-5-(all-trans-polyprenyl)benzoic acid into 2-methoxy-6-(all-trans-polyprenyl)phenol during ubiquinone biosynthesis. The protein is Ubiquinone biosynthesis protein COQ4 homolog, mitochondrial of Leishmania major.